Here is a 271-residue protein sequence, read N- to C-terminus: Glutamate racemase (271 aa).

Residues D9–S10 and Y41–G42 contribute to the substrate site. C72 serves as the catalytic Proton donor/acceptor. N73–T74 contributes to the substrate binding site. The active-site Proton donor/acceptor is the C183. T184–H185 is a substrate binding site.

This sequence belongs to the aspartate/glutamate racemases family.

The enzyme catalyses L-glutamate = D-glutamate. Its pathway is cell wall biogenesis; peptidoglycan biosynthesis. In terms of biological role, provides the (R)-glutamate required for cell wall biosynthesis. The polypeptide is Glutamate racemase (Exiguobacterium sibiricum (strain DSM 17290 / CCUG 55495 / CIP 109462 / JCM 13490 / 255-15)).